We begin with the raw amino-acid sequence, 133 residues long: Small ribosomal subunit protein uS8 (133 aa).

It belongs to the universal ribosomal protein uS8 family. Part of the 30S ribosomal subunit. Contacts proteins S5 and S12.

In terms of biological role, one of the primary rRNA binding proteins, it binds directly to 16S rRNA central domain where it helps coordinate assembly of the platform of the 30S subunit. This is Small ribosomal subunit protein uS8 from Mycoplasma mobile (strain ATCC 43663 / 163K / NCTC 11711) (Mesomycoplasma mobile).